Here is a 225-residue protein sequence, read N- to C-terminus: Cytidylate kinase (225 aa).

Residue 11-19 (GPAAAGKST) coordinates ATP.

This sequence belongs to the cytidylate kinase family. Type 1 subfamily.

Its subcellular location is the cytoplasm. The catalysed reaction is CMP + ATP = CDP + ADP. It carries out the reaction dCMP + ATP = dCDP + ADP. In Bacillus anthracis (strain A0248), this protein is Cytidylate kinase.